Reading from the N-terminus, the 1253-residue chain is Guanine nucleotide exchange factor SDC25 (1253 aa).

The SH3 domain maps to 26-98 (QPIDVVECTY…PPSFTRSILN (73 aa)). The tract at residues 624–649 (LNLDNAKDKKNGSQNTDIQEEEDEYE) is disordered. The region spanning 782-914 (GPIVRIKGGS…ELLKEVNQKF (133 aa)) is the N-terminal Ras-GEF domain. In terms of domain architecture, Ras-GEF spans 952-1199 (VDPVLFATQL…QYQLSLIIEP (248 aa)). A disordered region spans residues 1202-1253 (RKKVVPNSNSNNKSQEKSRDDQTDEGKTSTKKDRFPKFQLHKTKKKAPKVSK). The span at 1215-1237 (SQEKSRDDQTDEGKTSTKKDRFP) shows a compositional bias: basic and acidic residues. Residues 1240 to 1253 (QLHKTKKKAPKVSK) are compositionally biased toward basic residues.

Promotes the exchange of Ras-bound GDP by GTP. The sequence is that of Guanine nucleotide exchange factor SDC25 (SDC25) from Saccharomyces cerevisiae (Baker's yeast).